Consider the following 180-residue polypeptide: Large ribosomal subunit protein uL6 (180 aa).

The protein belongs to the universal ribosomal protein uL6 family. As to quaternary structure, part of the 50S ribosomal subunit.

Its function is as follows. This protein binds to the 23S rRNA, and is important in its secondary structure. It is located near the subunit interface in the base of the L7/L12 stalk, and near the tRNA binding site of the peptidyltransferase center. The protein is Large ribosomal subunit protein uL6 of Clostridium botulinum (strain Langeland / NCTC 10281 / Type F).